A 302-amino-acid chain; its full sequence is tRNA-cytidine(32) 2-sulfurtransferase (302 aa).

A PP-loop motif motif is present at residues 43–48 (SGGKDS). Positions 118, 121, and 209 each coordinate [4Fe-4S] cluster.

Belongs to the TtcA family. As to quaternary structure, homodimer. Requires Mg(2+) as cofactor. The cofactor is [4Fe-4S] cluster.

It is found in the cytoplasm. It carries out the reaction cytidine(32) in tRNA + S-sulfanyl-L-cysteinyl-[cysteine desulfurase] + AH2 + ATP = 2-thiocytidine(32) in tRNA + L-cysteinyl-[cysteine desulfurase] + A + AMP + diphosphate + H(+). It participates in tRNA modification. Functionally, catalyzes the ATP-dependent 2-thiolation of cytidine in position 32 of tRNA, to form 2-thiocytidine (s(2)C32). The sulfur atoms are provided by the cysteine/cysteine desulfurase (IscS) system. This chain is tRNA-cytidine(32) 2-sulfurtransferase, found in Polynucleobacter necessarius subsp. necessarius (strain STIR1).